Here is a 148-residue protein sequence, read N- to C-terminus: Glutamyl-tRNA(Gln) amidotransferase subunit C, mitochondrial (148 aa).

Residues 1–10 constitute a mitochondrion transit peptide; the sequence is MLRLLNKRFY.

This sequence belongs to the GatC family. Subunit of the heterotrimeric GatCAB amidotransferase (AdT) complex, composed of A, B and C subunits.

The protein resides in the mitochondrion. The catalysed reaction is L-glutamyl-tRNA(Gln) + L-glutamine + ATP + H2O = L-glutaminyl-tRNA(Gln) + L-glutamate + ADP + phosphate + H(+). Its function is as follows. Allows the formation of correctly charged Gln-tRNA(Gln) through the transamidation of misacylated Glu-tRNA(Gln) in the mitochondria. The reaction takes place in the presence of glutamine and ATP through an activated gamma-phospho-Glu-tRNA(Gln). This chain is Glutamyl-tRNA(Gln) amidotransferase subunit C, mitochondrial, found in Drosophila ananassae (Fruit fly).